We begin with the raw amino-acid sequence, 200 residues long: NADH-quinone oxidoreductase subunit C (200 aa).

It belongs to the complex I 30 kDa subunit family. As to quaternary structure, NDH-1 is composed of 14 different subunits. Subunits NuoB, C, D, E, F, and G constitute the peripheral sector of the complex.

The protein localises to the cell inner membrane. The enzyme catalyses a quinone + NADH + 5 H(+)(in) = a quinol + NAD(+) + 4 H(+)(out). NDH-1 shuttles electrons from NADH, via FMN and iron-sulfur (Fe-S) centers, to quinones in the respiratory chain. The immediate electron acceptor for the enzyme in this species is believed to be ubiquinone. Couples the redox reaction to proton translocation (for every two electrons transferred, four hydrogen ions are translocated across the cytoplasmic membrane), and thus conserves the redox energy in a proton gradient. The protein is NADH-quinone oxidoreductase subunit C of Burkholderia multivorans (strain ATCC 17616 / 249).